The sequence spans 683 residues: Inositol-trisphosphate 3-kinase C (683 aa).

The disordered stretch occupies residues 1–124 (MRRCPCRGSL…PDRSSLRTHL (124 aa)). A compositionally biased stretch (low complexity) spans 13–22 (AEAGALPAAA). Positions 44–58 (PGAGAPAGRPEGGGP) are enriched in gly residues. Residues 105–124 (ETERPKQKTEPDRSSLRTHL) are compositionally biased toward basic and acidic residues. 2 positions are modified to phosphoserine: S127 and S162. The interval 147–308 (TDPHRSDLQF…EDGPLEEPEP (162 aa)) is disordered. Over residues 196-206 (WTHQNSSSLQT) the composition is skewed to polar residues. Basic and acidic residues predominate over residues 249 to 259 (SQKKQDTEAAR). A compositionally biased stretch (polar residues) spans 267–289 (FQIQQDTDGSWTQPSTDGSQTAP). Positions 297–308 (EPEDGPLEEPEP) are enriched in acidic residues. Positions 324 to 332 (LCPVPRLII) match the Nuclear export signal motif. The tract at residues 334–387 (PETPEPEAQPVGPPSRVEGGSGGFSSASSFDESEDDVVAGGGGASDPEDRSGSK) is disordered. A Phosphothreonine modification is found at T336. Residue S404 is modified to Phosphoserine. ATP is bound by residues K431, 471–473 (EDL), and D484. Residues K486, 507 to 513 (RKDMYEK), and 534 to 541 (KPRYMQWR) each bind substrate. The interval 509 to 517 (DMYEKMVAV) is calmodulin-binding. ATP contacts are provided by K558 and D638. K641 is a substrate binding site.

The protein belongs to the inositol phosphokinase (IPK) family. In terms of tissue distribution, highly expressed in pancreas, skeletal muscle, liver, placenta and weakly in kidney and brain.

Its subcellular location is the nucleus. It is found in the cytoplasm. The enzyme catalyses 1D-myo-inositol 1,4,5-trisphosphate + ATP = 1D-myo-inositol 1,3,4,5-tetrakisphosphate + ADP + H(+). With respect to regulation, activated by calcium/calmodulin. Inhibited by high concentrations of the substrate Ins(1,2,4)P3, and allosterically activated by the product Ins(1,3,4,5)P4. Catalyzes the phosphorylation of 1D-myo-inositol 1,4,5-trisphosphate (InsP3) into 1D-myo-inositol 1,3,4,5-tetrakisphosphate and participates to the regulation of calcium homeostasis. Can phosphorylate inositol 2,4,5-triphosphate to inositol 2,4,5,6-tetraphosphate. The chain is Inositol-trisphosphate 3-kinase C from Homo sapiens (Human).